Here is a 1188-residue protein sequence, read N- to C-terminus: DNA polymerase (1188 aa).

Residues 1–74 are disordered; that stretch reads MALVPSPRAG…PAANNVSLTP (74 aa). Positions 31 to 41 are enriched in low complexity; the sequence is STAGAAPTATR.

It belongs to the DNA polymerase type-B family. Heterodimer with the terminal protein; this heterodimer binds to bp 9 to 18 of the genome. Forms a complex with viral pTP, DBP and hosts NFIA and POU2F1/OCT1 for initiation of replication.

It localises to the host nucleus. It catalyses the reaction DNA(n) + a 2'-deoxyribonucleoside 5'-triphosphate = DNA(n+1) + diphosphate. Eukaryotic-type DNA polymerase involved in viral genomic replication. DNA synthesis is protein primed, and acts in a strand displacement replication. Assembles in complex with viral pTP, DBP, host NFIA and host POU2F1/OCT1 on viral origin of replication. The polymerase covalently transfers dCMP onto pTP, thereby initiating complementary strand synthesis. The protein is DNA polymerase of Human adenovirus F serotype 40 (HAdV-40).